The primary structure comprises 180 residues: UPF0227 protein YcfP (180 aa).

This sequence belongs to the UPF0227 family.

This Salmonella choleraesuis (strain SC-B67) protein is UPF0227 protein YcfP.